The primary structure comprises 223 residues: 7-cyano-7-deazaguanine synthase (223 aa).

15–25 is an ATP binding site; sequence FSGGQDSTTCL. Residues cysteine 191, cysteine 200, cysteine 203, and cysteine 206 each contribute to the Zn(2+) site.

Belongs to the QueC family. In terms of assembly, homodimer. Zn(2+) serves as cofactor.

The catalysed reaction is 7-carboxy-7-deazaguanine + NH4(+) + ATP = 7-cyano-7-deazaguanine + ADP + phosphate + H2O + H(+). Its pathway is purine metabolism; 7-cyano-7-deazaguanine biosynthesis. In terms of biological role, catalyzes the ATP-dependent conversion of 7-carboxy-7-deazaguanine (CDG) to 7-cyano-7-deazaguanine (preQ(0)). This Staphylococcus saprophyticus subsp. saprophyticus (strain ATCC 15305 / DSM 20229 / NCIMB 8711 / NCTC 7292 / S-41) protein is 7-cyano-7-deazaguanine synthase.